The chain runs to 157 residues: Transcriptional repressor NrdR (157 aa).

The span at 1 to 11 shows a compositional bias: polar residues; the sequence is MQCPSCQNTDS. The tract at residues 1–21 is disordered; it reads MQCPSCQNTDSRVLESRSADT. A zinc finger lies at 3–34; it reads CPSCQNTDSRVLESRSADTGKSVRRRRECLNC. Residues 49–139 form the ATP-cone domain; the sequence is ITVIKRSESK…VYRQFNGIND (91 aa).

The protein belongs to the NrdR family. The cofactor is Zn(2+).

In terms of biological role, negatively regulates transcription of bacterial ribonucleotide reductase nrd genes and operons by binding to NrdR-boxes. The chain is Transcriptional repressor NrdR from Prochlorococcus marinus (strain MIT 9211).